Consider the following 161-residue polypeptide: UPF0178 protein BSUIS_A1819 (161 aa).

It belongs to the UPF0178 family.

The chain is UPF0178 protein BSUIS_A1819 from Brucella suis (strain ATCC 23445 / NCTC 10510).